The following is a 345-amino-acid chain: Beta-2-glycoprotein 1 (345 aa).

The signal sequence occupies residues 1–19; the sequence is MISPVLILFSSFLCHVAIA. 4 Sushi domains span residues 21–81, 82–139, 140–202, and 203–262; these read RTCP…KCTP, RVCP…VCAP, ITCP…ECRE, and VKCP…SCKA. 11 cysteine pairs are disulfide-bonded: cysteine 23–cysteine 66, cysteine 51–cysteine 79, cysteine 84–cysteine 124, cysteine 110–cysteine 137, cysteine 142–cysteine 188, cysteine 174–cysteine 200, cysteine 205–cysteine 248, cysteine 234–cysteine 260, cysteine 264–cysteine 315, cysteine 300–cysteine 325, and cysteine 307–cysteine 345. Threonine 33 carries an O-linked (GalNAc...) threonine glycan. The O-linked (GalNAc...) threonine glycan is linked to threonine 149. Residues asparagine 162, asparagine 183, and asparagine 193 are each glycosylated (N-linked (GlcNAc...) asparagine). An N-linked (GlcNAc...) asparagine glycan is attached at asparagine 253. The interval 263–345 is sushi-like; that stretch reads SCKVPVKKAT…KTDASDVKPC (83 aa).

As to expression, expressed by the liver and secreted in plasma.

The protein localises to the secreted. Binds to various kinds of negatively charged substances such as heparin, phospholipids, and dextran sulfate. May prevent activation of the intrinsic blood coagulation cascade by binding to phospholipids on the surface of damaged cells. The chain is Beta-2-glycoprotein 1 (APOH) from Pan troglodytes (Chimpanzee).